A 375-amino-acid polypeptide reads, in one-letter code: Serpin B5 (375 aa).

N99, N133, N155, N188, and N361 each carry an N-linked (GlcNAc...) asparagine glycan.

Belongs to the serpin family. Ov-serpin subfamily. In terms of assembly, interacts with IRF6.

The protein resides in the secreted. It is found in the extracellular space. Tumor suppressor. It blocks the growth, invasion, and metastatic properties of mammary tumors. As it does not undergo the S (stressed) to R (relaxed) conformational transition characteristic of active serpins, it exhibits no serine protease inhibitory activity. This is Serpin B5 (SERPINB5) from Plecturocebus moloch (Dusky titi monkey).